We begin with the raw amino-acid sequence, 624 residues long: Ubiquitin carboxyl-terminal hydrolase 16 (624 aa).

The 575-residue stretch at 46–620 folds into the USP domain; that stretch reads VGLSNPANDC…EVYLLFYEIE (575 aa). Residue cysteine 55 is the Nucleophile of the active site. Residue histidine 424 is the Proton acceptor of the active site. The segment at 453 to 573 is disordered; sequence SENPSRVASP…ATDTEASASA (121 aa). Positions 479-496 are enriched in low complexity; the sequence is SPPASTSTNSPLSLTPDS. Polar residues predominate over residues 518-544; it reads VSFQSTHSSSKQTISPTSAARNSSSLD. Low complexity predominate over residues 546-573; sequence ARLSSPASRSSLAERNASATDTEASASA.

It belongs to the peptidase C19 family.

It catalyses the reaction Thiol-dependent hydrolysis of ester, thioester, amide, peptide and isopeptide bonds formed by the C-terminal Gly of ubiquitin (a 76-residue protein attached to proteins as an intracellular targeting signal).. The sequence is that of Ubiquitin carboxyl-terminal hydrolase 16 (ubp16) from Emericella nidulans (strain FGSC A4 / ATCC 38163 / CBS 112.46 / NRRL 194 / M139) (Aspergillus nidulans).